We begin with the raw amino-acid sequence, 172 residues long: Large ribosomal subunit protein uL10 (172 aa).

It belongs to the universal ribosomal protein uL10 family. As to quaternary structure, part of the ribosomal stalk of the 50S ribosomal subunit. The N-terminus interacts with L11 and the large rRNA to form the base of the stalk. The C-terminus forms an elongated spine to which L12 dimers bind in a sequential fashion forming a multimeric L10(L12)X complex.

In terms of biological role, forms part of the ribosomal stalk, playing a central role in the interaction of the ribosome with GTP-bound translation factors. In Brucella suis (strain ATCC 23445 / NCTC 10510), this protein is Large ribosomal subunit protein uL10.